The sequence spans 261 residues: Indole-3-glycerol phosphate synthase (261 aa).

The protein belongs to the TrpC family.

The enzyme catalyses 1-(2-carboxyphenylamino)-1-deoxy-D-ribulose 5-phosphate + H(+) = (1S,2R)-1-C-(indol-3-yl)glycerol 3-phosphate + CO2 + H2O. The protein operates within amino-acid biosynthesis; L-tryptophan biosynthesis; L-tryptophan from chorismate: step 4/5. This is Indole-3-glycerol phosphate synthase from Burkholderia pseudomallei (strain 668).